A 431-amino-acid polypeptide reads, in one-letter code: Enolase (431 aa).

Residue Gln-163 coordinates (2R)-2-phosphoglycerate. Catalysis depends on Glu-205, which acts as the Proton donor. Mg(2+)-binding residues include Asp-242, Glu-288, and Asp-315. Lys-340, Arg-369, Ser-370, and Lys-391 together coordinate (2R)-2-phosphoglycerate. The active-site Proton acceptor is Lys-340.

Belongs to the enolase family. The cofactor is Mg(2+).

Its subcellular location is the cytoplasm. It is found in the secreted. The protein localises to the cell surface. It carries out the reaction (2R)-2-phosphoglycerate = phosphoenolpyruvate + H2O. It functions in the pathway carbohydrate degradation; glycolysis; pyruvate from D-glyceraldehyde 3-phosphate: step 4/5. Its function is as follows. Catalyzes the reversible conversion of 2-phosphoglycerate (2-PG) into phosphoenolpyruvate (PEP). It is essential for the degradation of carbohydrates via glycolysis. This chain is Enolase, found in Bacillus cereus (strain B4264).